We begin with the raw amino-acid sequence, 695 residues long: Hypersensitivity response secretion protein HrpI (695 aa).

7 consecutive transmembrane segments (helical) span residues 21–38 (LVGA…ITPL), 45–61 (VLIA…IMLA), 68–92 (LAFS…VSTT), 111–135 (FVVG…FLVI), 203–223 (AIAS…IGVL), 244–262 (GLIA…GMII), and 311–327 (VFIT…LLQL).

The protein belongs to the FHIPEP (flagella/HR/invasion proteins export pore) family.

Its subcellular location is the cell inner membrane. Its function is as follows. Involved in the secretion of harpin-pss; a proteinaceous elicitor of the hypersensitivity response in plants. This chain is Hypersensitivity response secretion protein HrpI (hrpI), found in Pseudomonas syringae pv. syringae.